A 228-amino-acid chain; its full sequence is Ribulose-phosphate 3-epimerase (228 aa).

Position 9 (Ser-9) interacts with substrate. The a divalent metal cation site is built by His-34, Asp-36, and His-70. Asp-36 (proton acceptor) is an active-site residue. Substrate-binding positions include His-70, Gly-146–Gly-149, Asp-179–Gly-181, and Gly-201–Ser-202. An a divalent metal cation-binding site is contributed by Asp-179. Catalysis depends on Asp-179, which acts as the Proton donor.

The protein belongs to the ribulose-phosphate 3-epimerase family. It depends on a divalent metal cation as a cofactor.

The enzyme catalyses D-ribulose 5-phosphate = D-xylulose 5-phosphate. It participates in carbohydrate degradation. In terms of biological role, catalyzes the reversible epimerization of D-ribulose 5-phosphate to D-xylulose 5-phosphate. In Buchnera aphidicola subsp. Baizongia pistaciae (strain Bp), this protein is Ribulose-phosphate 3-epimerase.